A 111-amino-acid chain; its full sequence is COX assembly mitochondrial protein (111 aa).

A CHCH domain is found at 39–82; the sequence is YKKCANFVQAMADCAKANGMKVFPTCDKQRDEMKSCLLFYQTDE. 2 short sequence motifs (cx9C motif) span residues 42-52 and 64-74; these read CANFVQAMADC and CDKQRDEMKSC. 2 cysteine pairs are disulfide-bonded: cysteine 42/cysteine 74 and cysteine 52/cysteine 64.

Belongs to the CMC family.

It localises to the mitochondrion inner membrane. Required for mitochondrial cytochrome c oxidase (COX) assembly and respiration. Binds copper. May be involved in copper trafficking and distribution to mitochondrial COX and SOD1. The sequence is that of COX assembly mitochondrial protein (CMC1) from Saccharomyces cerevisiae (strain RM11-1a) (Baker's yeast).